Here is a 625-residue protein sequence, read N- to C-terminus: RalA-binding protein 1 (625 aa).

Composition is skewed to basic and acidic residues over residues Met1–Phe11 and Ala20–Gly60. Residues Met1–Asp172 form a disordered region. Residues Ser68 and Ser69 each carry the phosphoserine modification. The span at Lys94–Asp157 shows a compositional bias: basic and acidic residues. Residues Val191–Pro385 enclose the Rho-GAP domain. Residues Gln443 to Asp500 form a disordered region. The segment covering Ala475–Gln484 has biased composition (polar residues).

As to quaternary structure, interacts with CycB and numb.

In terms of biological role, participates in receptor endocytosis during interphase, is also involved in mitotic processes when endocytosis is switched off. The protein is RalA-binding protein 1 of Drosophila melanogaster (Fruit fly).